The chain runs to 294 residues: N-acetylmuramic acid 6-phosphate etherase (294 aa).

The SIS domain occupies 54-217 (TIHSFKSNGR…STASMIGVGK (164 aa)). Residue Glu-82 is the Proton donor of the active site. Glu-113 is an active-site residue.

Belongs to the GCKR-like family. MurNAc-6-P etherase subfamily. Homodimer.

The enzyme catalyses N-acetyl-D-muramate 6-phosphate + H2O = N-acetyl-D-glucosamine 6-phosphate + (R)-lactate. Its pathway is amino-sugar metabolism; N-acetylmuramate degradation. Functionally, specifically catalyzes the cleavage of the D-lactyl ether substituent of MurNAc 6-phosphate, producing GlcNAc 6-phosphate and D-lactate. The polypeptide is N-acetylmuramic acid 6-phosphate etherase (Oceanobacillus iheyensis (strain DSM 14371 / CIP 107618 / JCM 11309 / KCTC 3954 / HTE831)).